The chain runs to 620 residues: MDNKISPEAQVAELELDAVIGFNGHVPTGLKCHPDQEHMIYPLGCTVLIQAINTKEQNFLQGHGNNVSCLAISRSGEYIASGQVTFMGFKADIILWDYKNRELLARLSLHKGKIEALAFSPNDLYLVSLGGPDDGSVVVWSIAKRDAICGSPAAGLNVGNATNVIFSRCRDEMFMTAGNGTIRVWELDLPNRKIWPTECQTGQLKRIVMSIGVDDDDSFFYLGTTTGDILKMNPRTKLLTDVGPAKDKFSLGVSAIRCLKMGGLLVGSGAGLLVFCKSPGYKPIKKIQLQGGITSITLRGEGHQFLVGTEESHIYRVSFTDFKETLIATCHFDAVEDIVFPFGTAELFATCAKKDIRVWHTSSNRELLRITVPNMTCHGIDFMRDGKSIISAWNDGKIRAFAPETGRLMYVINNAHRIGVTAIATTSDCKRVISGGGEGEVRVWQIGCQTQKLEEALKEHKSSVSCIRVKRNNEECVTASTDGTCIIWDLVRLRRNQMILANTLFQCVCYHPEEFQIITSGTDRKIAYWEVFDGTVIRELEGSLSGSINGMDITQEGVHFVTGGNDHLVKVWDYNEGEVTHVGVGHSGNITRIRISPGNQYIVSVSADGAILRWKYPYTS.

WD repeat units lie at residues 62-106, 109-150, 156-195, 288-327, 330-369, 372-411, 415-454, 459-498, 500-539, 543-582, and 585-620; these read GHGN…LLAR, LHKG…AICG, LNVG…RKIW, QLQG…ETLI, CHFD…ELLR, VPNM…LMYV, AHRI…QKLE, EHKS…RNQM, LANT…VIRE, SLSG…VTHV, and GHSG…PYTS.

Belongs to the CFAP52 family. As to quaternary structure, microtubule inner protein component of sperm flagellar doublet microtubules. Interacts with BRCA2. Interacts with the CCT chaperonin complex. Interacts with HSP70. Interacts with AK8. Interacts with CFAP45. Interacts with DNAI1. Interacts with IQDC. As to expression, expressed in respiratory cells and sperm (at protein level). Highly expressed in testis. Up-regulated in hepatocellular carcinoma (HCC).

The protein resides in the cytoplasm. Its subcellular location is the cytoskeleton. It is found in the cilium axoneme. The protein localises to the flagellum axoneme. Microtubule inner protein (MIP) part of the dynein-decorated doublet microtubules (DMTs) in cilia axoneme. Important for proper ciliary and flagellar beating. May act in cooperation with CFAP45 and axonemal dynein subunit DNAH11. May play a role in cell growth and/or survival. This chain is Cilia- and flagella-associated protein 52, found in Homo sapiens (Human).